An 841-amino-acid chain; its full sequence is Translation initiation factor IF-2 (841 aa).

A tr-type G domain is found at 341-508 (NRAPVVTIMG…AILLQAEILE (168 aa)). The tract at residues 350-357 (GHVDHGKT) is G1. A GTP-binding site is contributed by 350 to 357 (GHVDHGKT). Residues 375–379 (GITQC) form a G2 region. The interval 396–399 (DTPG) is G3. GTP-binding positions include 396–400 (DTPGH) and 450–453 (NKID). The interval 450-453 (NKID) is G4. The G5 stretch occupies residues 486-488 (SAK).

Belongs to the TRAFAC class translation factor GTPase superfamily. Classic translation factor GTPase family. IF-2 subfamily.

Its subcellular location is the cytoplasm. In terms of biological role, one of the essential components for the initiation of protein synthesis. Protects formylmethionyl-tRNA from spontaneous hydrolysis and promotes its binding to the 30S ribosomal subunits. Also involved in the hydrolysis of GTP during the formation of the 70S ribosomal complex. This is Translation initiation factor IF-2 from Wigglesworthia glossinidia brevipalpis.